The chain runs to 407 residues: uncharacterized protein (407 aa).

Disordered regions lie at residues 73-93 (SPHS…VHGG) and 116-202 (SGSI…IKPS). A run of 5 repeats spans residues 112–116 (GSIRS), 117–121 (GSIRS), 122–126 (GSIRN), 127–131 (GSIRS), and 132–136 (GSVRD). The segment at 112–136 (GSIRSGSIRSGSIRNGSIRSGSVRD) is 5 X 5 AA tandem repeats of G-[S]-[IV]-R-[DNS]. Residues 116 to 132 (SGSIRSGSIRNGSIRSG) show a composition bias toward low complexity. Residues 187–202 (NHYAESEYSEKSIKPS) are compositionally biased toward basic and acidic residues.

Belongs to the asfivirus B407L family.

This is an uncharacterized protein from Ornithodoros (relapsing fever ticks).